We begin with the raw amino-acid sequence, 123 residues long: Large ribosomal subunit protein eL8 (123 aa).

Belongs to the eukaryotic ribosomal protein eL8 family. Part of the 50S ribosomal subunit. Probably part of the RNase P complex.

The protein resides in the cytoplasm. Functionally, multifunctional RNA-binding protein that recognizes the K-turn motif in ribosomal RNA, the RNA component of RNase P, box H/ACA, box C/D and box C'/D' sRNAs. This chain is Large ribosomal subunit protein eL8, found in Methanopyrus kandleri (strain AV19 / DSM 6324 / JCM 9639 / NBRC 100938).